Consider the following 288-residue polypeptide: Phosphopantetheinyl transferase (288 aa).

CoA contacts are provided by residues Arg60, 99 to 104, and 118 to 121; these read RTEMGK and NLSH. Mg(2+) is bound by residues Asp139 and Glu196. 196–200 contacts CoA; that stretch reads EAYLK.

The protein belongs to the P-Pant transferase superfamily. AcpS family. As to quaternary structure, monomer.

It localises to the cytoplasm. The protein localises to the cytosol. It catalyses the reaction apo-[ACP] + CoA = holo-[ACP] + adenosine 3',5'-bisphosphate + H(+). It participates in lipid metabolism; fatty acid biosynthesis. In terms of biological role, phosphopantetheinyl transferase that is essential for attaching phosphopantetheine to ACP domains of the polyunsaturated fatty acid (PUFA) synthase converting the inactive apo-synthase to the active holo-synthase. The polypeptide is Phosphopantetheinyl transferase (Thraustochytrium sp. (strain ATCC 26185 / S-3)).